We begin with the raw amino-acid sequence, 628 residues long: Hemocyanin II (628 aa).

Blocked amino end (Thr); partial is present on Thr1. His173, His177, His204, His324, His328, and His364 together coordinate Cu cation. A glycan (N-linked (GlcNAc...) asparagine) is linked at Asn449. Disulfide bonds link Cys534–Cys576 and Cys536–Cys583.

It belongs to the tyrosinase family. Hemocyanin subfamily. As to quaternary structure, hexamer or a multiple thereof. Hemolymph.

It localises to the secreted. It is found in the extracellular space. Functionally, hemocyanins are copper-containing oxygen carriers occurring freely dissolved in the hemolymph of many mollusks and arthropods. The protein is Hemocyanin II of Limulus polyphemus (Atlantic horseshoe crab).